The chain runs to 561 residues: DNA ligase B (561 aa).

Catalysis depends on Lys-125, which acts as the N6-AMP-lysine intermediate.

The protein belongs to the NAD-dependent DNA ligase family. LigB subfamily.

It catalyses the reaction NAD(+) + (deoxyribonucleotide)n-3'-hydroxyl + 5'-phospho-(deoxyribonucleotide)m = (deoxyribonucleotide)n+m + AMP + beta-nicotinamide D-nucleotide.. Its function is as follows. Catalyzes the formation of phosphodiester linkages between 5'-phosphoryl and 3'-hydroxyl groups in double-stranded DNA using NAD as a coenzyme and as the energy source for the reaction. The polypeptide is DNA ligase B (Salmonella newport (strain SL254)).